The following is a 200-amino-acid chain: MTIKSLLSDIEREERNVHKAIKDSVKRNDLVTAKALAREIVSSRRTVKRLYENKAQVNSISMHLGESIATAVTVGNLSKSGEVMKLVNSLMKAPEIAVTMQAFSKEMTKTGVIEEFVSDAVDNALDSEDIEEEIEEEVDKVLTAIAGETAAELPEAVRKQKMNVPAQKAETLHGEDAIVEGVDAEEELEAIRYRLANVRS.

Residues 2 to 23 (TIKSLLSDIEREERNVHKAIKD) adopt a coiled-coil conformation.

It belongs to the SNF7 family. In terms of assembly, component of the endosomal sorting required for transport complex III (ESCRT-III), composed at least of VPS2, VPS20, VPS24 and VPS32.

It localises to the endosome. Its function is as follows. Component of the ESCRT-III complex, which is required for multivesicular bodies (MVBs) formation and sorting of endosomal cargo proteins into MVBs. The ESCRT-III complex is probably involved in the concentration of MVB cargo. The sequence is that of Putative vacuolar protein sorting-associated protein 24 homolog 2 (VPS24-2) from Arabidopsis thaliana (Mouse-ear cress).